A 707-amino-acid chain; its full sequence is Polyribonucleotide nucleotidyltransferase (707 aa).

Asp484 and Asp490 together coordinate Mg(2+). Residues 551-610 (PRVVRMVVNPEKIRDIIGPAGKTITKIISETGVKIDIEEDGRLYITAPNLEAGERAKQMI) form the KH domain. In terms of domain architecture, S1 motif spans 620-688 (GGIYLGKVLR…KLGRIVLSRK (69 aa)). Positions 688–707 (KDAMPDEEESDNRKSDNRKK) are disordered. The span at 698–707 (DNRKSDNRKK) shows a compositional bias: basic and acidic residues.

This sequence belongs to the polyribonucleotide nucleotidyltransferase family. Mg(2+) serves as cofactor.

It localises to the cytoplasm. The enzyme catalyses RNA(n+1) + phosphate = RNA(n) + a ribonucleoside 5'-diphosphate. Involved in mRNA degradation. Catalyzes the phosphorolysis of single-stranded polyribonucleotides processively in the 3'- to 5'-direction. This Caldanaerobacter subterraneus subsp. tengcongensis (strain DSM 15242 / JCM 11007 / NBRC 100824 / MB4) (Thermoanaerobacter tengcongensis) protein is Polyribonucleotide nucleotidyltransferase.